The chain runs to 221 residues: MQDNALTIALSKGRIFEETLPLLAAAGIAPTEEPEKSRKLIIGTNHENIRLVIVRATDVPTYVRYGAADFGIAGKDVLIEHGGTGLYRPLDLEIAKCRMMVAVRKGFDYEAASQPGCRLKIATKYPEIAASHFAGKGVHVDIIKLYGSMELAPLVGLSDAIVDLVSTGNTLKANGLEAVEHIVDISSYLVVNKAALKTKYALLEPIIQSFGGAVKAKWAFI.

This sequence belongs to the ATP phosphoribosyltransferase family. Short subfamily. In terms of assembly, heteromultimer composed of HisG and HisZ subunits.

It is found in the cytoplasm. The enzyme catalyses 1-(5-phospho-beta-D-ribosyl)-ATP + diphosphate = 5-phospho-alpha-D-ribose 1-diphosphate + ATP. It functions in the pathway amino-acid biosynthesis; L-histidine biosynthesis; L-histidine from 5-phospho-alpha-D-ribose 1-diphosphate: step 1/9. Catalyzes the condensation of ATP and 5-phosphoribose 1-diphosphate to form N'-(5'-phosphoribosyl)-ATP (PR-ATP). Has a crucial role in the pathway because the rate of histidine biosynthesis seems to be controlled primarily by regulation of HisG enzymatic activity. The sequence is that of ATP phosphoribosyltransferase from Neisseria gonorrhoeae (strain ATCC 700825 / FA 1090).